A 354-amino-acid chain; its full sequence is Uroporphyrinogen decarboxylase (354 aa).

Substrate is bound by residues 25–29 (RQAGR), Asp-75, Tyr-152, Thr-207, and His-330.

This sequence belongs to the uroporphyrinogen decarboxylase family. In terms of assembly, homodimer.

The protein localises to the cytoplasm. It catalyses the reaction uroporphyrinogen III + 4 H(+) = coproporphyrinogen III + 4 CO2. It participates in porphyrin-containing compound metabolism; protoporphyrin-IX biosynthesis; coproporphyrinogen-III from 5-aminolevulinate: step 4/4. Its function is as follows. Catalyzes the decarboxylation of four acetate groups of uroporphyrinogen-III to yield coproporphyrinogen-III. The polypeptide is Uroporphyrinogen decarboxylase (Xanthomonas campestris pv. campestris (strain 8004)).